We begin with the raw amino-acid sequence, 383 residues long: MSVTAAKGFTAAGITAGIKESGSPDLALVVNTGPRRSAAGVFTSNRVKAAPVLWSEQVLKSGEVTAVVLNSGGANACTGPKGFQDTHATAEKAADVLGTGAGEVAVCSTGLIGVLLPMDKLLPGVEAAAGQLSEHGGEKAAIAIKTTDTVHKTSVVTRDGWTVGGMAKGAGMLAPGLATMLVVITTDADLETEALDRALRAATRVTFDRVDSDGCMSTNDTVLLLSSGSSGVTPEYDAFAEAVRTVCDDLGQQLIRDAEGASKDIKVEVVNAATEDEAVQVGRTIARNNLLKCAIHGEDPNWGRVLSAIGTTDAAFEPDRLNVAINGVWVCKNGGVGEDRELVDMRYREVHIVADLAAGDATATIWTNDLTADYVHENSAYSS.

Substrate contacts are provided by Thr-146, Lys-168, Thr-179, Glu-259, Asn-378, and Ser-383. Residue Thr-179 is the Nucleophile of the active site.

This sequence belongs to the ArgJ family. Heterotetramer of two alpha and two beta chains.

It is found in the cytoplasm. It carries out the reaction N(2)-acetyl-L-ornithine + L-glutamate = N-acetyl-L-glutamate + L-ornithine. The catalysed reaction is L-glutamate + acetyl-CoA = N-acetyl-L-glutamate + CoA + H(+). It participates in amino-acid biosynthesis; L-arginine biosynthesis; L-ornithine and N-acetyl-L-glutamate from L-glutamate and N(2)-acetyl-L-ornithine (cyclic): step 1/1. Its pathway is amino-acid biosynthesis; L-arginine biosynthesis; N(2)-acetyl-L-ornithine from L-glutamate: step 1/4. Its function is as follows. Catalyzes two activities which are involved in the cyclic version of arginine biosynthesis: the synthesis of N-acetylglutamate from glutamate and acetyl-CoA as the acetyl donor, and of ornithine by transacetylation between N(2)-acetylornithine and glutamate. This Streptomyces coelicolor (strain ATCC BAA-471 / A3(2) / M145) protein is Arginine biosynthesis bifunctional protein ArgJ.